Reading from the N-terminus, the 248-residue chain is Isopentenyl phosphate kinase (248 aa).

7-11 (KLGGS) contacts ATP. G49 is a substrate binding site. Position 50 (G50) interacts with ATP. Positions 54 and 152 each coordinate substrate. 2 residues coordinate ATP: G209 and K213.

The protein belongs to the isopentenyl phosphate kinase family. In terms of assembly, homodimer.

It carries out the reaction isopentenyl phosphate + ATP = isopentenyl diphosphate + ADP. Its function is as follows. Catalyzes the phosphorylation of isopentenyl phosphate (IP) to isopentenyl diphosphate (IPP). Functions in an alternate mevalonate (MVA) pathway leading to IPP, a key precursor for the biosynthesis of isoprenoid compounds such as archaeal membrane lipids. The polypeptide is Isopentenyl phosphate kinase (Haloferax volcanii (strain ATCC 29605 / DSM 3757 / JCM 8879 / NBRC 14742 / NCIMB 2012 / VKM B-1768 / DS2) (Halobacterium volcanii)).